Consider the following 388-residue polypeptide: tRNA(Ile)-lysidine synthase (388 aa).

51–56 provides a ligand contact to ATP; sequence SGGRDS.

The protein belongs to the tRNA(Ile)-lysidine synthase family.

It is found in the cytoplasm. It catalyses the reaction cytidine(34) in tRNA(Ile2) + L-lysine + ATP = lysidine(34) in tRNA(Ile2) + AMP + diphosphate + H(+). Its function is as follows. Ligates lysine onto the cytidine present at position 34 of the AUA codon-specific tRNA(Ile) that contains the anticodon CAU, in an ATP-dependent manner. Cytidine is converted to lysidine, thus changing the amino acid specificity of the tRNA from methionine to isoleucine. The sequence is that of tRNA(Ile)-lysidine synthase from Bifidobacterium longum (strain DJO10A).